Here is a 750-residue protein sequence, read N- to C-terminus: Polyribonucleotide nucleotidyltransferase (750 aa).

Mg(2+) contacts are provided by Asp-519 and Asp-525. The KH domain occupies 585-644 (PRVIAVKIPVDKIGEVIGPKGKMINQIQEDTGADISIEDDGTVYIGATNGPSADAARSAI). Residues 656–728 (GERYLGTVVK…DRGKLSLSPV (73 aa)) form the S1 motif domain. Positions 725 to 750 (LSPVVAEEEGAASEDAPAEAAEESAE) are disordered. Residues 730 to 750 (AEEEGAASEDAPAEAAEESAE) are compositionally biased toward acidic residues.

This sequence belongs to the polyribonucleotide nucleotidyltransferase family. Mg(2+) serves as cofactor.

The protein resides in the cytoplasm. It catalyses the reaction RNA(n+1) + phosphate = RNA(n) + a ribonucleoside 5'-diphosphate. Its function is as follows. Involved in mRNA degradation. Catalyzes the phosphorolysis of single-stranded polyribonucleotides processively in the 3'- to 5'-direction. This Paenarthrobacter aurescens (strain TC1) protein is Polyribonucleotide nucleotidyltransferase.